A 244-amino-acid chain; its full sequence is Small ribosomal subunit protein uS2m (244 aa).

This sequence belongs to the universal ribosomal protein uS2 family.

It localises to the mitochondrion. The protein is Small ribosomal subunit protein uS2m (mrps2) of Dictyostelium discoideum (Social amoeba).